A 665-amino-acid chain; its full sequence is Ion-translocating oxidoreductase complex subunit C (665 aa).

2 4Fe-4S ferredoxin-type domains span residues E368–Y398 and K408–F437. [4Fe-4S] cluster is bound by residues C378, C381, C384, C388, C417, C420, C423, and C427. 2 stretches are compositionally biased toward basic and acidic residues: residues Q465–A477 and A485–E513. 3 disordered regions span residues Q465 to K568, A580 to K623, and K637 to R665. Composition is skewed to polar residues over residues V554 to T564 and Q585 to E600. Residues E602–E615 show a composition bias toward basic and acidic residues. Polar residues predominate over residues N643 to E656.

Belongs to the 4Fe4S bacterial-type ferredoxin family. RnfC subfamily. The complex is composed of six subunits: RnfA, RnfB, RnfC, RnfD, RnfE and RnfG. It depends on [4Fe-4S] cluster as a cofactor.

It is found in the cell inner membrane. Part of a membrane-bound complex that couples electron transfer with translocation of ions across the membrane. The chain is Ion-translocating oxidoreductase complex subunit C from Haemophilus influenzae (strain 86-028NP).